The primary structure comprises 76 residues: Putative phosphotransferase enzyme IIA component YyzE (76 aa).

Residues 1–76 (MVTPTKHAIG…LHQKIFTVVS (76 aa)) form the PTS EIIA type-1 domain. The active-site Tele-phosphohistidine intermediate is the His-22.

The protein resides in the cytoplasm. In terms of biological role, the phosphoenolpyruvate-dependent sugar phosphotransferase system (PTS), a major carbohydrate active -transport system, catalyzes the phosphorylation of incoming sugar substrates concomitant with their translocation across the cell membrane. The sequence is that of Putative phosphotransferase enzyme IIA component YyzE (yyzE) from Bacillus subtilis (strain 168).